The primary structure comprises 385 residues: Methionyl-tRNA formyltransferase, mitochondrial (385 aa).

This sequence belongs to the Fmt family.

Its subcellular location is the mitochondrion. It carries out the reaction L-methionyl-tRNA(fMet) + (6R)-10-formyltetrahydrofolate = N-formyl-L-methionyl-tRNA(fMet) + (6S)-5,6,7,8-tetrahydrofolate + H(+). Methionyl-tRNA formyltransferase that formylates methionyl-tRNA in mitochondria and is crucial for translation initiation. This is Methionyl-tRNA formyltransferase, mitochondrial (Mtfmt) from Rattus norvegicus (Rat).